The chain runs to 116 residues: Small ribosomal subunit protein bS6 (116 aa).

Positions 94–116 (ESITEPSPLTKPKEDRKGDSEAA) are disordered. Residues 104-116 (KPKEDRKGDSEAA) are compositionally biased toward basic and acidic residues.

This sequence belongs to the bacterial ribosomal protein bS6 family.

In terms of biological role, binds together with bS18 to 16S ribosomal RNA. In Idiomarina loihiensis (strain ATCC BAA-735 / DSM 15497 / L2-TR), this protein is Small ribosomal subunit protein bS6.